The following is a 104-amino-acid chain: Large ribosomal subunit protein bL21 (104 aa).

The protein belongs to the bacterial ribosomal protein bL21 family. In terms of assembly, part of the 50S ribosomal subunit. Contacts protein L20.

Its function is as follows. This protein binds to 23S rRNA in the presence of protein L20. The sequence is that of Large ribosomal subunit protein bL21 from Streptococcus mutans serotype c (strain ATCC 700610 / UA159).